A 491-amino-acid polypeptide reads, in one-letter code: UDP-N-acetylmuramate--L-alanine ligase (491 aa).

126–132 is an ATP binding site; that stretch reads GTHGKTT.

It belongs to the MurCDEF family.

It localises to the cytoplasm. The catalysed reaction is UDP-N-acetyl-alpha-D-muramate + L-alanine + ATP = UDP-N-acetyl-alpha-D-muramoyl-L-alanine + ADP + phosphate + H(+). It functions in the pathway cell wall biogenesis; peptidoglycan biosynthesis. Cell wall formation. This Shigella sonnei (strain Ss046) protein is UDP-N-acetylmuramate--L-alanine ligase.